Reading from the N-terminus, the 427-residue chain is WD repeat and SOCS box-containing protein 1 (427 aa).

5 WD repeats span residues 129-170 (SRSI…LLLN), 173-213 (DHTD…NMVK), 217-256 (GHPN…LIRK), 259-298 (GHHN…ILLE), and 314-353 (ANDR…PQAV). Positions 379-427 (SVHFWECPRSIASLQHLCRMALRRVKTTQQVEALPVPMPLRDFLTYRVV) constitute an SOCS box domain.

As to quaternary structure, component of a probable ECS E3 ubiquitin-protein ligase complex that contains the Elongin BC complex.

Its pathway is protein modification; protein ubiquitination. Its function is as follows. Probable substrate-recognition component of a SCF-like ECS (Elongin-Cullin-SOCS-box protein) E3 ubiquitin-protein ligase complex which mediates the ubiquitination and subsequent proteasomal degradation of target proteins. This chain is WD repeat and SOCS box-containing protein 1 (wsb1), found in Takifugu rubripes (Japanese pufferfish).